A 201-amino-acid chain; its full sequence is Protein CD300H (201 aa).

Residues 1–24 (MTQRAGAAMLPSALLLLCVPGCLT) form the signal peptide. The region spanning 25–123 (VSGPSTVMGA…ATILQEDGLS (99 aa)) is the Ig-like V-type domain. The Extracellular segment spans residues 25-168 (VSGPSTVMGA…CQGSLPSSTC (144 aa)). A disulfide bridge connects residues C43 and C111. N100 is a glycosylation site (N-linked (GlcNAc...) asparagine). A helical transmembrane segment spans residues 169–189 (FLLLPLLKVPLLLSILGAILW). Residues 190–201 (VNRPWRTPWTES) are Cytoplasmic-facing.

Belongs to the CD300 family. Interacts with TYROBP and HCST. Expressed on CD16+ monocytes and myeloid dendritic cells (at protein level). By contrast, not detected in lymphocytes nor granulocytes (at protein level).

The protein resides in the membrane. The protein localises to the secreted. In terms of biological role, may play an important role in innate immunity by mediating a signal for the production of a neutrophil chemoattractant. This chain is Protein CD300H, found in Homo sapiens (Human).